The primary structure comprises 428 residues: Probable mitochondrial adenine nucleotide transporter BTL3 (428 aa).

3 Solcar repeats span residues 129-212 (LNTT…YRGQ), 222-307 (TTNF…LKSA), and 336-421 (LGPM…MKVV). 6 helical membrane-spanning segments follow: residues 132 to 152 (TKHLWAGAFAAMVSRTCIAPL), 187 to 207 (GNLVNILRTAPFKSINFYAYD), 228 to 248 (FVAGAAAGVTASLLCLPLDTI), 283 to 303 (LVPSLVSMAPSGAVFYGVYDI), 342 to 362 (LLYGAIAGACSEAATYPFEVV), and 390 to 410 (VPALYAGLIPSLLQVLPSAAI).

This sequence belongs to the mitochondrial carrier (TC 2.A.29) family.

Its subcellular location is the mitochondrion inner membrane. Functionally, probable mitochondrial adenylate carrier that catalyzes the transport of ATP, ADP and AMP. In Arabidopsis thaliana (Mouse-ear cress), this protein is Probable mitochondrial adenine nucleotide transporter BTL3.